The primary structure comprises 170 residues: Adenine phosphoribosyltransferase (170 aa).

The protein belongs to the purine/pyrimidine phosphoribosyltransferase family. Homodimer.

It is found in the cytoplasm. The enzyme catalyses AMP + diphosphate = 5-phospho-alpha-D-ribose 1-diphosphate + adenine. It functions in the pathway purine metabolism; AMP biosynthesis via salvage pathway; AMP from adenine: step 1/1. In terms of biological role, catalyzes a salvage reaction resulting in the formation of AMP, that is energically less costly than de novo synthesis. The protein is Adenine phosphoribosyltransferase of Geobacillus sp. (strain WCH70).